The sequence spans 316 residues: Phosphate acyltransferase (316 aa).

The protein belongs to the PlsX family. Homodimer. Probably interacts with PlsY.

Its subcellular location is the cytoplasm. The enzyme catalyses a fatty acyl-[ACP] + phosphate = an acyl phosphate + holo-[ACP]. It participates in lipid metabolism; phospholipid metabolism. In terms of biological role, catalyzes the reversible formation of acyl-phosphate (acyl-PO(4)) from acyl-[acyl-carrier-protein] (acyl-ACP). This enzyme utilizes acyl-ACP as fatty acyl donor, but not acyl-CoA. In Chlamydia abortus (strain DSM 27085 / S26/3) (Chlamydophila abortus), this protein is Phosphate acyltransferase.